The chain runs to 182 residues: MRILGIDPGLQTTGFGVIDVDGHRLAYVASGTIRTTGIALGDLPGRLKLLFDGISEVASRYQPDTSAVEIVFVNVNPQSTLLLGQARGAALTALVNAGLPVAEYTALQMKKAMTGHGRAAKSQIQEMVRRLLQLPGLPGTDAADALGLAITHAHAGAAMSKMAEVTQLQRRQHAVYKGGRVY.

Catalysis depends on residues D7, E69, and D141. Positions 7, 69, and 141 each coordinate Mg(2+).

Belongs to the RuvC family. Homodimer which binds Holliday junction (HJ) DNA. The HJ becomes 2-fold symmetrical on binding to RuvC with unstacked arms; it has a different conformation from HJ DNA in complex with RuvA. In the full resolvosome a probable DNA-RuvA(4)-RuvB(12)-RuvC(2) complex forms which resolves the HJ. Mg(2+) is required as a cofactor.

The protein localises to the cytoplasm. It carries out the reaction Endonucleolytic cleavage at a junction such as a reciprocal single-stranded crossover between two homologous DNA duplexes (Holliday junction).. Functionally, the RuvA-RuvB-RuvC complex processes Holliday junction (HJ) DNA during genetic recombination and DNA repair. Endonuclease that resolves HJ intermediates. Cleaves cruciform DNA by making single-stranded nicks across the HJ at symmetrical positions within the homologous arms, yielding a 5'-phosphate and a 3'-hydroxyl group; requires a central core of homology in the junction. The consensus cleavage sequence is 5'-(A/T)TT(C/G)-3'. Cleavage occurs on the 3'-side of the TT dinucleotide at the point of strand exchange. HJ branch migration catalyzed by RuvA-RuvB allows RuvC to scan DNA until it finds its consensus sequence, where it cleaves and resolves the cruciform DNA. This chain is Crossover junction endodeoxyribonuclease RuvC, found in Delftia acidovorans (strain DSM 14801 / SPH-1).